The chain runs to 262 residues: Mitochondrial calcium uniporter regulator 1 (262 aa).

Positions 138 to 175 (EKSEFSALRTQNEKVKIELQQLKKQLNDSIVKVRASNK) form a coiled coil. Residues 239 to 261 (TIKYLAGSVFTCLTIALGFYRLW) form a helical membrane-spanning segment.

This sequence belongs to the CCDC90 family.

The protein resides in the mitochondrion inner membrane. Functionally, key regulator of mitochondrial calcium uniporter (mcu) required for calcium entry into mitochondrion. The sequence is that of Mitochondrial calcium uniporter regulator 1 from Xenopus tropicalis (Western clawed frog).